The chain runs to 502 residues: Mannitol 2-dehydrogenase (502 aa).

An NAD(+)-binding site is contributed by 37-48 (IVHVGVGGFHRA).

Belongs to the mannitol dehydrogenase family. Monomer.

The enzyme catalyses D-mannitol + NAD(+) = D-fructose + NADH + H(+). Functionally, catalyzes the NAD(H)-dependent interconversion of D-fructose and D-mannitol in the mannitol metabolic pathway. The sequence is that of Mannitol 2-dehydrogenase from Aspergillus oryzae (strain ATCC 42149 / RIB 40) (Yellow koji mold).